We begin with the raw amino-acid sequence, 347 residues long: Phenylalanine--tRNA ligase alpha subunit (347 aa).

Glutamate 261 is a Mg(2+) binding site.

It belongs to the class-II aminoacyl-tRNA synthetase family. Phe-tRNA synthetase alpha subunit type 1 subfamily. In terms of assembly, tetramer of two alpha and two beta subunits. Mg(2+) serves as cofactor.

The protein resides in the cytoplasm. It catalyses the reaction tRNA(Phe) + L-phenylalanine + ATP = L-phenylalanyl-tRNA(Phe) + AMP + diphosphate + H(+). The protein is Phenylalanine--tRNA ligase alpha subunit of Streptococcus thermophilus (strain CNRZ 1066).